We begin with the raw amino-acid sequence, 144 residues long: Transcription antitermination protein NusB (144 aa).

This sequence belongs to the NusB family.

Functionally, involved in transcription antitermination. Required for transcription of ribosomal RNA (rRNA) genes. Binds specifically to the boxA antiterminator sequence of the ribosomal RNA (rrn) operons. In Paraburkholderia phytofirmans (strain DSM 17436 / LMG 22146 / PsJN) (Burkholderia phytofirmans), this protein is Transcription antitermination protein NusB.